Consider the following 73-residue polypeptide: Large ribosomal subunit protein bL31 (73 aa).

Cysteine 16, cysteine 18, cysteine 38, and cysteine 41 together coordinate Zn(2+).

Belongs to the bacterial ribosomal protein bL31 family. Type A subfamily. In terms of assembly, part of the 50S ribosomal subunit. Zn(2+) is required as a cofactor.

Its function is as follows. Binds the 23S rRNA. This chain is Large ribosomal subunit protein bL31, found in Vibrio vulnificus (strain CMCP6).